We begin with the raw amino-acid sequence, 394 residues long: 1-deoxy-D-xylulose 5-phosphate reductoisomerase (394 aa).

NADPH-binding residues include T14, G15, S16, I17, G40, and N128. K129 contacts 1-deoxy-D-xylulose 5-phosphate. E130 provides a ligand contact to NADPH. D154 is a Mn(2+) binding site. 1-deoxy-D-xylulose 5-phosphate is bound by residues S155, E156, S180, and H203. E156 provides a ligand contact to Mn(2+). G209 is an NADPH binding site. Residues S216, N221, K222, and E225 each contribute to the 1-deoxy-D-xylulose 5-phosphate site. E225 provides a ligand contact to Mn(2+).

It belongs to the DXR family. Mg(2+) serves as cofactor. It depends on Mn(2+) as a cofactor.

It carries out the reaction 2-C-methyl-D-erythritol 4-phosphate + NADP(+) = 1-deoxy-D-xylulose 5-phosphate + NADPH + H(+). The protein operates within isoprenoid biosynthesis; isopentenyl diphosphate biosynthesis via DXP pathway; isopentenyl diphosphate from 1-deoxy-D-xylulose 5-phosphate: step 1/6. Its function is as follows. Catalyzes the NADPH-dependent rearrangement and reduction of 1-deoxy-D-xylulose-5-phosphate (DXP) to 2-C-methyl-D-erythritol 4-phosphate (MEP). This Xylella fastidiosa (strain M23) protein is 1-deoxy-D-xylulose 5-phosphate reductoisomerase.